The chain runs to 424 residues: tRNA modification GTPase MnmE (424 aa).

Arg-20, Glu-77, and Arg-117 together coordinate (6S)-5-formyl-5,6,7,8-tetrahydrofolate. The TrmE-type G domain maps to 212 to 351; the sequence is GVRVVFAGPP…LVRDLRDAAR (140 aa). Residue Asn-222 participates in K(+) binding. GTP contacts are provided by residues 222 to 227, 241 to 247, and 266 to 269; these read NAGKST, SPIAGTT, and DTAG. Ser-226 contributes to the Mg(2+) binding site. The K(+) site is built by Ser-241, Ile-243, and Thr-246. Thr-247 is a binding site for Mg(2+). Residue Lys-424 participates in (6S)-5-formyl-5,6,7,8-tetrahydrofolate binding.

It belongs to the TRAFAC class TrmE-Era-EngA-EngB-Septin-like GTPase superfamily. TrmE GTPase family. Homodimer. Heterotetramer of two MnmE and two MnmG subunits. Requires K(+) as cofactor.

The protein resides in the cytoplasm. Its function is as follows. Exhibits a very high intrinsic GTPase hydrolysis rate. Involved in the addition of a carboxymethylaminomethyl (cmnm) group at the wobble position (U34) of certain tRNAs, forming tRNA-cmnm(5)s(2)U34. This Erythrobacter litoralis (strain HTCC2594) protein is tRNA modification GTPase MnmE.